A 443-amino-acid polypeptide reads, in one-letter code: ATP-dependent protease ATPase subunit HslU (443 aa).

ATP is bound by residues Ile-18 and 60 to 65 (GVGKTE). The segment at 139 to 158 (AKNNWGQNETPAEPSSARQS) is disordered. The ATP site is built by Asp-256, Glu-321, and Arg-393.

The protein belongs to the ClpX chaperone family. HslU subfamily. A double ring-shaped homohexamer of HslV is capped on each side by a ring-shaped HslU homohexamer. The assembly of the HslU/HslV complex is dependent on binding of ATP.

It localises to the cytoplasm. Its function is as follows. ATPase subunit of a proteasome-like degradation complex; this subunit has chaperone activity. The binding of ATP and its subsequent hydrolysis by HslU are essential for unfolding of protein substrates subsequently hydrolyzed by HslV. HslU recognizes the N-terminal part of its protein substrates and unfolds these before they are guided to HslV for hydrolysis. The polypeptide is ATP-dependent protease ATPase subunit HslU (Erwinia tasmaniensis (strain DSM 17950 / CFBP 7177 / CIP 109463 / NCPPB 4357 / Et1/99)).